The following is a 456-amino-acid chain: Major facilitator superfamily domain-containing protein 10 (456 aa).

The next 3 membrane-spanning stretches (helical) occupy residues 25–45 (VIIV…LLLP), 87–107 (VLFG…SAPL), and 114–136 (YLGR…AVWA). N-linked (GlcNAc...) asparagine glycosylation is present at asparagine 159. Transmembrane regions (helical) follow at residues 179–199 (AVIG…GAFL), 203–223 (MVPW…FCFL), 278–298 (LVYF…SFLA), 311–328 (KMFF…GTYA), 345–365 (LLLV…TLGL), 366–386 (GLML…TMVS), 403–423 (SLGA…YWLT), and 424–444 (GAQV…LLLW).

It belongs to the major facilitator superfamily. Esxpressed in luminal membrane of renal tubules. Expressed at the surface of eosinophils (at protein level).

It localises to the nucleus inner membrane. It is found in the cell membrane. Probable organic anion transporter which may serve as a transporter for some non-steroidal anti-inflammatory drugs (NSAIDs) as well as other organic anions across the luminal membranes of renal proximal tubules at the final excretion step into the urine. This Mus musculus (Mouse) protein is Major facilitator superfamily domain-containing protein 10 (Mfsd10).